The sequence spans 212 residues: Large ribosomal subunit protein uL1 (212 aa).

It belongs to the universal ribosomal protein uL1 family. As to quaternary structure, part of the 50S ribosomal subunit.

Functionally, binds directly to 23S rRNA. Probably involved in E site tRNA release. Protein L1 is also a translational repressor protein, it controls the translation of its operon by binding to its mRNA. This Methanosphaera stadtmanae (strain ATCC 43021 / DSM 3091 / JCM 11832 / MCB-3) protein is Large ribosomal subunit protein uL1.